Here is a 540-residue protein sequence, read N- to C-terminus: Putative cysteine ligase BshC (540 aa).

Positions 455–491 form a coiled coil; that stretch reads GKENLKRLIRVVNSFEEKVKQRHRKNNQVAIQQLQKI.

Belongs to the BshC family.

Involved in bacillithiol (BSH) biosynthesis. May catalyze the last step of the pathway, the addition of cysteine to glucosamine malate (GlcN-Mal) to generate BSH. The sequence is that of Putative cysteine ligase BshC from Desulforamulus reducens (strain ATCC BAA-1160 / DSM 100696 / MI-1) (Desulfotomaculum reducens).